A 390-amino-acid chain; its full sequence is Precorrin-6Y C(5,15)-methyltransferase [decarboxylating] (390 aa).

The protein belongs to the precorrin methyltransferase family.

It carries out the reaction precorrin-6B + 2 S-adenosyl-L-methionine = precorrin-8X + 2 S-adenosyl-L-homocysteine + CO2 + 3 H(+). Its pathway is cofactor biosynthesis; adenosylcobalamin biosynthesis; cob(II)yrinate a,c-diamide from precorrin-2 (aerobic route): step 7/10. Catalyzes the methylation of both C-5 and C-15 in precorrin-6Y to form precorrin-8X. This Mycobacterium tuberculosis (strain ATCC 25618 / H37Rv) protein is Precorrin-6Y C(5,15)-methyltransferase [decarboxylating] (cobL).